The following is a 387-amino-acid chain: 3-ketoacyl-CoA thiolase (387 aa).

Catalysis depends on cysteine 91, which acts as the Acyl-thioester intermediate. Residues histidine 343 and cysteine 373 each act as proton acceptor in the active site.

It belongs to the thiolase-like superfamily. Thiolase family. In terms of assembly, heterotetramer of two alpha chains (FadB) and two beta chains (FadA).

Its subcellular location is the cytoplasm. It catalyses the reaction an acyl-CoA + acetyl-CoA = a 3-oxoacyl-CoA + CoA. Its pathway is lipid metabolism; fatty acid beta-oxidation. Its function is as follows. Catalyzes the final step of fatty acid oxidation in which acetyl-CoA is released and the CoA ester of a fatty acid two carbons shorter is formed. The protein is 3-ketoacyl-CoA thiolase of Aliivibrio salmonicida (strain LFI1238) (Vibrio salmonicida (strain LFI1238)).